The chain runs to 160 residues: Periplasmic nitrate reductase, electron transfer subunit (160 aa).

Residues 1–25 (MKTRIIFAALALAAAMPLLVSGVFA) form the signal peptide. Positions 73, 87, 90, 91, 108, 127, 130, and 131 each coordinate heme c.

The protein belongs to the NapB family. In terms of assembly, component of the periplasmic nitrate reductase NapAB complex composed of NapA and NapB. Post-translationally, binds 2 heme C groups per subunit.

Its subcellular location is the periplasm. Electron transfer subunit of the periplasmic nitrate reductase complex NapAB. Receives electrons from the membrane-anchored tetraheme c-type NapC protein and transfers these to NapA subunit, thus allowing electron flow between membrane and periplasm. Essential for periplasmic nitrate reduction with nitrate as the terminal electron acceptor. This Azospirillum brasilense protein is Periplasmic nitrate reductase, electron transfer subunit.